The following is a 273-amino-acid chain: Phosphate import ATP-binding protein PstB (273 aa).

An ABC transporter domain is found at 18-257 (ISLQNVTISY…EFDKTKKIFN (240 aa)). 50–57 (GPSGCGKS) lines the ATP pocket.

It belongs to the ABC transporter superfamily. Phosphate importer (TC 3.A.1.7) family. The complex is composed of two ATP-binding proteins (PstB), two transmembrane proteins (PstC and PstA) and a solute-binding protein (PstS).

It localises to the cell inner membrane. The catalysed reaction is phosphate(out) + ATP + H2O = ADP + 2 phosphate(in) + H(+). Its function is as follows. Part of the ABC transporter complex PstSACB involved in phosphate import. Responsible for energy coupling to the transport system. The protein is Phosphate import ATP-binding protein PstB of Prochlorococcus marinus (strain SARG / CCMP1375 / SS120).